An 84-amino-acid polypeptide reads, in one-letter code: uncharacterized protein (84 aa).

This is an uncharacterized protein from Lepidoptera (butterflies and moths).